Reading from the N-terminus, the 362-residue chain is Chorismate synthase (362 aa).

Arg47 serves as a coordination point for NADP(+). FMN is bound by residues 124 to 126 (RSS), Gly286, 301 to 305 (KPTAT), and Arg327.

It belongs to the chorismate synthase family. As to quaternary structure, homotetramer. FMNH2 is required as a cofactor.

It carries out the reaction 5-O-(1-carboxyvinyl)-3-phosphoshikimate = chorismate + phosphate. The protein operates within metabolic intermediate biosynthesis; chorismate biosynthesis; chorismate from D-erythrose 4-phosphate and phosphoenolpyruvate: step 7/7. Its function is as follows. Catalyzes the anti-1,4-elimination of the C-3 phosphate and the C-6 proR hydrogen from 5-enolpyruvylshikimate-3-phosphate (EPSP) to yield chorismate, which is the branch point compound that serves as the starting substrate for the three terminal pathways of aromatic amino acid biosynthesis. This reaction introduces a second double bond into the aromatic ring system. This is Chorismate synthase from Rippkaea orientalis (strain PCC 8801 / RF-1) (Cyanothece sp. (strain PCC 8801)).